The sequence spans 615 residues: Deoxyribodipyrimidine photo-lyase (615 aa).

The disordered stretch occupies residues 1–53; it reads MAPSKRKASAPPQTSHVNGNPSADKKRKTTTDAPPTNPNTSSDPLRAPHPFYK. Over residues 11–21 the composition is skewed to polar residues; sequence PPQTSHVNGNP. Over residues 31-40 the composition is skewed to low complexity; sequence TDAPPTNPNT. The Photolyase/cryptochrome alpha/beta domain occupies 108–249; it reads QAVVHWFKMD…AADVVHDTCV (142 aa). Tyrosine 352 contacts FAD. Arginine 356 provides a ligand contact to DNA. 364-368 lines the FAD pocket; it reads TSNLS. 2 interaction with DNA regions span residues 407-414 and 474-475; these read EVAWRDFY and NR. FAD is bound at residue 505-507; it reads DGD. Position 537 (glutamine 537) interacts with DNA.

The protein belongs to the DNA photolyase class-1 family. Monomer. Requires FAD as cofactor. (6R)-5,10-methylene-5,6,7,8-tetrahydrofolate serves as cofactor.

It catalyses the reaction cyclobutadipyrimidine (in DNA) = 2 pyrimidine residues (in DNA).. Involved in repair of UV radiation-induced DNA damage. Catalyzes the light-dependent monomerization (300-600 nm) of cyclobutyl pyrimidine dimers (in cis-syn configuration), which are formed between adjacent bases on the same DNA strand upon exposure to ultraviolet radiation. The protein is Deoxyribodipyrimidine photo-lyase (phr) of Neurospora crassa (strain ATCC 24698 / 74-OR23-1A / CBS 708.71 / DSM 1257 / FGSC 987).